Here is a 349-residue protein sequence, read N- to C-terminus: Protein Wnt-7b (349 aa).

Residues 1 to 24 (MHRNFRKWIFYVFLCFGVLYVKLG) form the signal peptide. Intrachain disulfides connect Cys-73–Cys-84, Cys-123–Cys-131, Cys-133–Cys-152, Cys-200–Cys-214, and Cys-202–Cys-209. Residues Asn-83 and Asn-127 are each glycosylated (N-linked (GlcNAc...) asparagine). Residue Ser-206 is the site of O-palmitoleoyl serine; by PORCN attachment. The interval 238–266 (VEVVRASRLRQPTFLRIKQLRSYQKPMET) is disordered linker. Disulfide bonds link Cys-278-Cys-309, Cys-294-Cys-304, Cys-308-Cys-348, Cys-324-Cys-339, Cys-326-Cys-336, and Cys-331-Cys-332. Asn-295 carries an N-linked (GlcNAc...) asparagine glycan.

It belongs to the Wnt family. Forms a soluble 1:1 complex with AFM; this prevents oligomerization and is required for prolonged biological activity. The complex with AFM may represent the physiological form in body fluids. Interacts with FZD1 and FZD10. Interacts with FZD4 (in vitro). Interacts with PORCN. Interacts with glypican GPC3. Interacts (via intrinsically disordered linker region) with RECK; interaction with RECK confers ligand selectivity for Wnt7 in brain endothelial cells and allows these cells to selectively respond to Wnt7. In terms of processing, palmitoleoylation is required for efficient binding to frizzled receptors. Depalmitoleoylation leads to Wnt signaling pathway inhibition.

It is found in the secreted. Its subcellular location is the extracellular space. It localises to the extracellular matrix. Its function is as follows. Ligand for members of the frizzled family of seven transmembrane receptors that functions in the canonical Wnt/beta-catenin signaling pathway. Required for normal fusion of the chorion and the allantois during placenta development. Required for central nervous system (CNS) angiogenesis and blood-brain barrier regulation. This chain is Protein Wnt-7b (Wnt7b), found in Mus musculus (Mouse).